Reading from the N-terminus, the 299-residue chain is Epimerase family protein SERP0438 (299 aa).

Belongs to the NAD(P)-dependent epimerase/dehydratase family. SDR39U1 subfamily.

The protein is Epimerase family protein SERP0438 of Staphylococcus epidermidis (strain ATCC 35984 / DSM 28319 / BCRC 17069 / CCUG 31568 / BM 3577 / RP62A).